A 49-amino-acid polypeptide reads, in one-letter code: Large ribosomal subunit protein bL33B (49 aa).

This sequence belongs to the bacterial ribosomal protein bL33 family.

In Bacillus cereus (strain ATCC 14579 / DSM 31 / CCUG 7414 / JCM 2152 / NBRC 15305 / NCIMB 9373 / NCTC 2599 / NRRL B-3711), this protein is Large ribosomal subunit protein bL33B.